Reading from the N-terminus, the 56-residue chain is Single-pass membrane and coiled-coil domain-containing protein 4 homolog (56 aa).

The disordered stretch occupies residues 1 to 27; it reads MRQLPGKAAKETRKMKRERKQQNKEGH. Positions 9–31 form a coiled coil; it reads AKETRKMKRERKQQNKEGHNRVV. The chain crosses the membrane as a helical span at residues 30–50; sequence VVTVAIPVCLAVFVMLIVYVY.

Belongs to the SMCO4 family.

The protein localises to the membrane. This is Single-pass membrane and coiled-coil domain-containing protein 4 homolog from Nematostella vectensis (Starlet sea anemone).